A 353-amino-acid polypeptide reads, in one-letter code: GTPase Obg (353 aa).

The region spanning 1-159 is the Obg domain; the sequence is MKFLDEAKVY…RWIWLRLKLI (159 aa). In terms of domain architecture, OBG-type G spans 160–327; it reads ADAGLVGLPN…ALRALVAVIG (168 aa). GTP is bound by residues 166–173, 191–195, 212–215, 279–282, and 308–310; these read GLPNAGKS, FTTLH, DIPG, NKID, and SGV. 2 residues coordinate Mg(2+): serine 173 and threonine 193.

It belongs to the TRAFAC class OBG-HflX-like GTPase superfamily. OBG GTPase family. As to quaternary structure, monomer. Mg(2+) serves as cofactor.

Its subcellular location is the cytoplasm. Functionally, an essential GTPase which binds GTP, GDP and possibly (p)ppGpp with moderate affinity, with high nucleotide exchange rates and a fairly low GTP hydrolysis rate. Plays a role in control of the cell cycle, stress response, ribosome biogenesis and in those bacteria that undergo differentiation, in morphogenesis control. This chain is GTPase Obg, found in Rhodopseudomonas palustris (strain ATCC BAA-98 / CGA009).